A 1286-amino-acid polypeptide reads, in one-letter code: ABC transporter B family member 4 (1286 aa).

Positions 1 to 39 (MASESGLNGDPNILEEVSETKRDKEEEEEVKKTEKKDEE) are disordered. The segment covering 18-39 (SETKRDKEEEEEVKKTEKKDEE) has biased composition (basic and acidic residues). A helical membrane pass occupies residues 60–80 (FLLMILGTLGSIGNGLGFPLM). The ABC transmembrane type-1 1 domain occupies 63 to 349 (MILGTLGSIG…TSPCLSAFAA (287 aa)). N-linked (GlcNAc...) asparagine glycans are attached at residues asparagine 94 and asparagine 97. 5 consecutive transmembrane segments (helical) span residues 109-129 (FVWLGIGTFAAAFLQLSGWMI), 186-206 (IQLLATFVGGFVIAFVRGWLL), 208-228 (LVMLSSIPLLVMAGALLAIVI), 288-308 (GLGLGTLFLVVFCSYALAVWY), and 317-337 (GYTGGQVLNIIIAVLTGSMSL). Residues 384–620 (IELKDVYFTY…PEGAYSQLIR (237 aa)) enclose the ABC transporter 1 domain. 419-426 (GQSGSGKS) serves as a coordination point for ATP. Residues asparagine 500 and asparagine 571 are each glycosylated (N-linked (GlcNAc...) asparagine). Residues 625–636 (KKSDENAAEEQK) are compositionally biased toward basic and acidic residues. The segment at 625–669 (KKSDENAAEEQKMSSIESFKQSSLRKSSLGRSLSKGGSSRGNSSR) is disordered. Residues 646 to 669 (SSLRKSSLGRSLSKGGSSRGNSSR) are compositionally biased toward low complexity. Asparagine 666 carries N-linked (GlcNAc...) asparagine glycosylation. Residue serine 671 is modified to Phosphoserine. The region spanning 720-1007 (LILGSISAAA…SSSLSPDSSK (288 aa)) is the ABC transmembrane type-1 2 domain. A run of 2 helical transmembrane segments spans residues 721-741 (ILGSISAAANGVILPIFGILI) and 764-784 (IIFMVLGFASIIAYPAQTFFF). Asparagine 816 and asparagine 846 each carry an N-linked (GlcNAc...) asparagine glycan. 4 consecutive transmembrane segments (helical) span residues 850-870 (ILAGLIIAFLACWQLAFVVLA), 871-891 (MLPLIALNGFLYMKFMKGFSA), 942-962 (GIVSGIGFGFSFFVLFSSYAA), and 976-996 (TTFDSVFRVFFALTMAAMAIS). The region spanning 1042-1279 (IELRHVSFKY…KDGVYASLVQ (238 aa)) is the ABC transporter 2 domain. 1077–1084 (GESGSGKS) contacts ATP. N-linked (GlcNAc...) asparagine glycosylation is found at asparagine 1131 and asparagine 1230.

The protein belongs to the ABC transporter superfamily. ABCB family. Multidrug resistance exporter (TC 3.A.1.201) subfamily. Interacts with 1-naphthylphthalamic acid (NPA). Phosphorylation level varies significantly during early response to bacterial elicitor. As to expression, mostly expressed in roots, especially in the root elongation zone and lateral roots. In mature portion of the root, expressed in the epidermis and cortex. In the root elongation zone, confined to epidermis. In root tips, present in the root cap, S3 columella and epidermal cells.

Its subcellular location is the cell membrane. Functionally, auxin influx transporter that mediates the transport of auxin in roots. Contributes to the basipetal transport in hypocotyls and root tips by establishing an auxin uptake sink in the root cap. Confers sensitivity to 1-N-naphthylphthalamic acid (NPA). Regulates the root elongation, the initiation of lateral roots and the development of root hairs. Can transport IAA, indole-3-propionic acid, NPA syringic acid, vanillic acid and some auxin metabolites, but not 2,4-D and 1-naphthaleneacetic acid. In Arabidopsis thaliana (Mouse-ear cress), this protein is ABC transporter B family member 4 (ABCB4).